A 1102-amino-acid polypeptide reads, in one-letter code: MPKRSDIQSVLVIGSGPIVIGQAAEFDYSGTQACRVLKAEGLRVILVNSNPATIMTDPEIADATYVEPITPEFVEKIIAKERPDALLPTLGGQTALNTAISMHDNGVLEKYGVELIGANVEAINKGEDRDLFKGVVEAVKEKIGYGESARSVICHSMDDVIAGVDTLGGYPVVVRPSFTMGGAGSGFAHDEEELRRIAGQGLTLSPTTEVLLEESILGWKEYELELMRDRNDNVVVVCSIENFDPMGVHTGDSITVAPAMTLTDREYQRLRDVGIAIIREVGVDTGGCNIQFAIDPTDGRVIVIEMNPRVSRSSALASKATGFPIAKIAAKLAVGYTLDEIPNDITEKTPASFEPTLDYVVVKAPRFAFEKFPSADSSLTTTMKSVGEAMAIGRNFTEALQKALRSLEKKGSQFAFTGPVGDKAELLAEAVRPTDGRINTVMQAIRAGATQEEVFDATKIDPWFVDQLFLIKEIADELASAERLDAGLIAEAKRHGFSDAQIGGIRGLREDVVREVRHALGIRPVYKTVDTCAAEFAAKTPYFYSSYDEESEVAPRTKPAVIILGSGPNRIGQGIEFDYSCVHASFALSDAGYETVMVNCNPETVSTDYDTSDRLYFEPLTLEDVLEIVHAESLAGPIAGVIVQLGGQTPLGLSQALKDNGVPVVGTSPEAIHAAEDRGAFGRVLAEAGLPAPKHGTATTFAEAKAIADEIGYPVLVRPSYVLGGRGMEIVYDETRLASYISESTEISPTRPVLVDRFLDDAIEIDVDALYDGTELYLGGVMEHIEEAGIHSGDSACALPPITLGGFDIKRLRASTEGIAKGVGVLGLINIQFALSGDILYVLEANPRASRTVPFTSKATAVPLAKAAARISLGATIAELRAEGLLPRTGDGGTLPLDAPISVKEAVMPWSRFRDIHGRGVDTVLGPEMRSTGEVMGIDSVFGTAYAKSQAGAYGPLPTAGRAFISVANRDKRSMIFPARELVAHGFELMATSGTAEVLKRNGINATVVRKQSEGTGPNGEKTIVQHIHDGEVDLIVNTPYGTGGRLDGYEIRTAAVARSVPCLTTVQALAAAVQGIDALNHGGVGVRSLQEHAEHLTAARD.

Residues methionine 1–glutamate 408 are carboxyphosphate synthetic domain. 12 residues coordinate ATP: arginine 129, arginine 175, glycine 181, glycine 182, glutamate 214, isoleucine 216, glutamate 221, glycine 247, valine 248, histidine 249, glutamine 291, and glutamate 305. Residues glutamate 137–valine 334 enclose the ATP-grasp 1 domain. 3 residues coordinate Mg(2+): glutamine 291, glutamate 305, and asparagine 307. Residues glutamine 291, glutamate 305, and asparagine 307 each coordinate Mn(2+). The tract at residues lysine 409–serine 551 is oligomerization domain. The carbamoyl phosphate synthetic domain stretch occupies residues glutamate 552–tyrosine 954. In terms of domain architecture, ATP-grasp 2 spans glycine 682 to leucine 873. Residues arginine 718, arginine 757, leucine 759, glutamate 764, glycine 789, isoleucine 790, histidine 791, serine 792, glutamine 832, and glutamate 844 each contribute to the ATP site. Mg(2+)-binding residues include glutamine 832, glutamate 844, and asparagine 846. Mn(2+) is bound by residues glutamine 832, glutamate 844, and asparagine 846. The region spanning glycine 955–alanine 1100 is the MGS-like domain. The segment at glycine 955–aspartate 1102 is allosteric domain.

It belongs to the CarB family. Composed of two chains; the small (or glutamine) chain promotes the hydrolysis of glutamine to ammonia, which is used by the large (or ammonia) chain to synthesize carbamoyl phosphate. Tetramer of heterodimers (alpha,beta)4. It depends on Mg(2+) as a cofactor. The cofactor is Mn(2+).

It catalyses the reaction hydrogencarbonate + L-glutamine + 2 ATP + H2O = carbamoyl phosphate + L-glutamate + 2 ADP + phosphate + 2 H(+). The catalysed reaction is hydrogencarbonate + NH4(+) + 2 ATP = carbamoyl phosphate + 2 ADP + phosphate + 2 H(+). Its pathway is amino-acid biosynthesis; L-arginine biosynthesis; carbamoyl phosphate from bicarbonate: step 1/1. The protein operates within pyrimidine metabolism; UMP biosynthesis via de novo pathway; (S)-dihydroorotate from bicarbonate: step 1/3. In terms of biological role, large subunit of the glutamine-dependent carbamoyl phosphate synthetase (CPSase). CPSase catalyzes the formation of carbamoyl phosphate from the ammonia moiety of glutamine, carbonate, and phosphate donated by ATP, constituting the first step of 2 biosynthetic pathways, one leading to arginine and/or urea and the other to pyrimidine nucleotides. The large subunit (synthetase) binds the substrates ammonia (free or transferred from glutamine from the small subunit), hydrogencarbonate and ATP and carries out an ATP-coupled ligase reaction, activating hydrogencarbonate by forming carboxy phosphate which reacts with ammonia to form carbamoyl phosphate. This Streptomyces griseus subsp. griseus (strain JCM 4626 / CBS 651.72 / NBRC 13350 / KCC S-0626 / ISP 5235) protein is Carbamoyl phosphate synthase large chain.